The chain runs to 101 residues: Small ribosomal subunit protein bS18c (101 aa).

The span at 1–19 (MDKSKRLFRKSKRSFRRRL) shows a compositional bias: basic residues. The interval 1–23 (MDKSKRLFRKSKRSFRRRLPPIG) is disordered.

Belongs to the bacterial ribosomal protein bS18 family. In terms of assembly, part of the 30S ribosomal subunit.

Its subcellular location is the plastid. It localises to the chloroplast. The chain is Small ribosomal subunit protein bS18c from Liriodendron tulipifera (Tuliptree).